We begin with the raw amino-acid sequence, 415 residues long: 3-isopropylmalate dehydratase large subunit (415 aa).

[4Fe-4S] cluster-binding residues include Cys-297, Cys-355, and Cys-358.

It belongs to the aconitase/IPM isomerase family. LeuC type 2 subfamily. Heterodimer of LeuC and LeuD. [4Fe-4S] cluster serves as cofactor.

The enzyme catalyses (2R,3S)-3-isopropylmalate = (2S)-2-isopropylmalate. It functions in the pathway amino-acid biosynthesis; L-leucine biosynthesis; L-leucine from 3-methyl-2-oxobutanoate: step 2/4. Its function is as follows. Catalyzes the isomerization between 2-isopropylmalate and 3-isopropylmalate, via the formation of 2-isopropylmaleate. The polypeptide is 3-isopropylmalate dehydratase large subunit (Sulfurisphaera tokodaii (strain DSM 16993 / JCM 10545 / NBRC 100140 / 7) (Sulfolobus tokodaii)).